A 93-amino-acid polypeptide reads, in one-letter code: UPF0358 protein BH2626 (93 aa).

It belongs to the UPF0358 family.

The sequence is that of UPF0358 protein BH2626 from Halalkalibacterium halodurans (strain ATCC BAA-125 / DSM 18197 / FERM 7344 / JCM 9153 / C-125) (Bacillus halodurans).